The primary structure comprises 506 residues: NADH-quinone oxidoreductase subunit N 2 (506 aa).

A run of 14 helical transmembrane segments spans residues 11-31, 44-64, 82-102, 117-137, 140-160, 175-195, 222-242, 254-274, 289-309, 323-345, 356-376, 394-414, 419-439, and 472-492; these read SLAY…LVVW, LVIL…YFLA, FSNL…LFLV, SGEL…MAAS, LLLI…LAGF, VIFG…IFGI, VFVG…AAPF, PTPV…AVLI, GVAT…MTVG, LAYS…SGAG, YCFM…ESGG, AAAM…AGFI, LFSA…VVGV, and LLGG…VYWG.

The protein belongs to the complex I subunit 2 family. NDH-1 is composed of 14 different subunits. Subunits NuoA, H, J, K, L, M, N constitute the membrane sector of the complex.

Its subcellular location is the cell inner membrane. The enzyme catalyses a quinone + NADH + 5 H(+)(in) = a quinol + NAD(+) + 4 H(+)(out). In terms of biological role, NDH-1 shuttles electrons from NADH, via FMN and iron-sulfur (Fe-S) centers, to quinones in the respiratory chain. The immediate electron acceptor for the enzyme in this species is believed to be ubiquinone. Couples the redox reaction to proton translocation (for every two electrons transferred, four hydrogen ions are translocated across the cytoplasmic membrane), and thus conserves the redox energy in a proton gradient. The sequence is that of NADH-quinone oxidoreductase subunit N 2 from Sorangium cellulosum (strain So ce56) (Polyangium cellulosum (strain So ce56)).